The primary structure comprises 1126 residues: Carbamoyl phosphate synthase large chain (1126 aa).

Residues 1–402 (MPKRTDIKSV…SLGKAMRSID (402 aa)) form a carboxyphosphate synthetic domain region. Residues arginine 129, arginine 169, glycine 175, glycine 176, glutamate 208, isoleucine 210, glutamate 215, glycine 241, valine 242, histidine 243, glutamine 285, and glutamate 299 each contribute to the ATP site. An ATP-grasp 1 domain is found at 133 to 328 (KKVVEEAGAE…IAKIATKLAL (196 aa)). Glutamine 285, glutamate 299, and asparagine 301 together coordinate Mg(2+). Residues glutamine 285, glutamate 299, and asparagine 301 each contribute to the Mn(2+) site. Positions 403–551 (KRHMGFNWDG…YYYSCYADET (149 aa)) are oligomerization domain. Residues 552-962 (ELRPRDREAV…AFAKSQLAAY (411 aa)) form a carbamoyl phosphate synthetic domain region. Positions 681–881 (GEVLKKADMN…LAKAAARIMV (201 aa)) constitute an ATP-grasp 2 domain. ATP-binding residues include arginine 717, lysine 765, leucine 767, glutamate 772, glycine 797, valine 798, histidine 799, serine 800, glutamine 840, and glutamate 852. Mg(2+) contacts are provided by glutamine 840, glutamate 852, and asparagine 854. Mn(2+)-binding residues include glutamine 840, glutamate 852, and asparagine 854. The allosteric domain stretch occupies residues 963-1126 (EGGLPTSGNV…TQLFELESRD (164 aa)). In terms of domain architecture, MGS-like spans 964 to 1126 (GGLPTSGNVF…TQLFELESRD (163 aa)).

Belongs to the CarB family. As to quaternary structure, composed of two chains; the small (or glutamine) chain promotes the hydrolysis of glutamine to ammonia, which is used by the large (or ammonia) chain to synthesize carbamoyl phosphate. Tetramer of heterodimers (alpha,beta)4. Mg(2+) is required as a cofactor. Requires Mn(2+) as cofactor.

It catalyses the reaction hydrogencarbonate + L-glutamine + 2 ATP + H2O = carbamoyl phosphate + L-glutamate + 2 ADP + phosphate + 2 H(+). The catalysed reaction is hydrogencarbonate + NH4(+) + 2 ATP = carbamoyl phosphate + 2 ADP + phosphate + 2 H(+). The protein operates within amino-acid biosynthesis; L-arginine biosynthesis; carbamoyl phosphate from bicarbonate: step 1/1. Its pathway is pyrimidine metabolism; UMP biosynthesis via de novo pathway; (S)-dihydroorotate from bicarbonate: step 1/3. In terms of biological role, large subunit of the glutamine-dependent carbamoyl phosphate synthetase (CPSase). CPSase catalyzes the formation of carbamoyl phosphate from the ammonia moiety of glutamine, carbonate, and phosphate donated by ATP, constituting the first step of 2 biosynthetic pathways, one leading to arginine and/or urea and the other to pyrimidine nucleotides. The large subunit (synthetase) binds the substrates ammonia (free or transferred from glutamine from the small subunit), hydrogencarbonate and ATP and carries out an ATP-coupled ligase reaction, activating hydrogencarbonate by forming carboxy phosphate which reacts with ammonia to form carbamoyl phosphate. This Bifidobacterium adolescentis (strain ATCC 15703 / DSM 20083 / NCTC 11814 / E194a) protein is Carbamoyl phosphate synthase large chain.